We begin with the raw amino-acid sequence, 626 residues long: Dual specificity testis-specific protein kinase 1 (626 aa).

A disordered region spans residues 1-41 (MAGERPPLRGPGPGPGEVPGEGPPGPGGTGGGPGRGRPSSY). Residues 8-26 (LRGPGPGPGEVPGEGPPGP) are compositionally biased toward pro residues. The 258-residue stretch at 57–314 (FHCAEKIGAG…TEITQHLEWI (258 aa)) folds into the Protein kinase domain. ATP contacts are provided by residues 63–71 (IGAGFFSEV) and Lys86. Asp175 serves as the catalytic Proton acceptor. Ser220 bears the Phosphoserine; by autocatalysis mark. Disordered stretches follow at residues 331 to 373 (HNQG…NWGD), 423 to 488 (ETLV…QLPL), and 529 to 564 (WAGEPWNRAQHSLPRAAALERTEPSPPPSAPREPDE). Arg338 carries the omega-N-methylarginine modification. Over residues 348–357 (PDPRLSRSRS) the composition is skewed to basic and acidic residues. Residues 419-524 (VTTPETLVQP…NNNPPAVVVN (106 aa)) are required for interaction with YWHAB. The segment covering 476–485 (EPEPPGPAPQ) has biased composition (pro residues). A required for interaction with PARVA region spans residues 527–624 (QGWAGEPWNR…PTPSLQLPGA (98 aa)). The interval 527–626 (QGWAGEPWNR…PSLQLPGARS (100 aa)) is required for interaction with SPRED1 and SPRY2. Required for TESK1-mediated dephosphorylation of SPRY2 and SPRY2 inhibition of ERK phosphorylation.

Belongs to the protein kinase superfamily. TKL Ser/Thr protein kinase family. In terms of assembly, interacts (via both C- and N-termini) with SPRY4 (via C-terminus); the interaction inhibits TESK1 kinase activity. Interacts with TAOK1; the interaction inhibits TAOK1 kinase activity. Interacts (via C-terminus) with SPRED1 (via C-terminus); the interaction inhibits TESK1 kinase activity. Interacts (via C-terminus) with PARVA/PARVIN (via C-terminus); the interaction inhibits TESK1 kinase activity. Interacts with YWHAB/14-3-3 beta; the interaction is dependent on the phosphorylation of TESK1 Ser-437 and inhibits TESK1 kinase activity. Interacts with SPRY1, SPRY3 and SPRED2. Interacts (via C-terminus) with SPRY2 (via C-terminus); the interaction disrupts SPRY2 interaction with PPP2CA/PP2A-C, possibly by vesicular sequestration of SPRY2. Therefore dephosphorylation of SPRY2 by the serine/threonine-protein phosphatase 2A (PP2A) holoenzyme is lost, inhibiting its interaction with GRB2. Mg(2+) serves as cofactor. The cofactor is Mn(2+). Post-translationally, autophosphorylated on serine and tyrosine residues. As to expression, expressed in podocytes and renal tubular cells in the kidney (at protein level).

It localises to the cytoplasm. Its subcellular location is the perinuclear region. The protein localises to the cytoskeleton. The protein resides in the microtubule organizing center. It is found in the centrosome. It localises to the cell projection. Its subcellular location is the lamellipodium. The catalysed reaction is L-seryl-[protein] + ATP = O-phospho-L-seryl-[protein] + ADP + H(+). It catalyses the reaction L-threonyl-[protein] + ATP = O-phospho-L-threonyl-[protein] + ADP + H(+). It carries out the reaction L-tyrosyl-[protein] + ATP = O-phospho-L-tyrosyl-[protein] + ADP + H(+). With respect to regulation, activated by autophosphorylation on Ser-220. Kinase activity is inhibited by SPRED1. Its function is as follows. Dual specificity protein kinase activity catalyzing autophosphorylation and phosphorylation of exogenous substrates on both serine/threonine and tyrosine residues. Regulates the cellular cytoskeleton by enhancing actin stress fiber formation via phosphorylation of cofilin and by preventing microtubule breakdown via inhibition of TAOK1/MARKK kinase activity. Inhibits podocyte motility via regulation of actin cytoskeletal dynamics and phosphorylation of CFL1. Positively regulates integrin-mediated cell spreading, via phosphorylation of cofilin. Suppresses ciliogenesis via multiple pathways; phosphorylation of CFL1, suppression of ciliary vesicle directional trafficking to the ciliary base, and by facilitating YAP1 nuclear localization where it acts as a transcriptional corepressor of the TEAD4 target genes AURKA and PLK1. Probably plays a central role at and after the meiotic phase of spermatogenesis. The protein is Dual specificity testis-specific protein kinase 1 (TESK1) of Homo sapiens (Human).